Reading from the N-terminus, the 144-residue chain is Large ribosomal subunit protein uL11 (144 aa).

This sequence belongs to the universal ribosomal protein uL11 family. In terms of assembly, part of the ribosomal stalk of the 50S ribosomal subunit. Interacts with L10 and the large rRNA to form the base of the stalk. L10 forms an elongated spine to which L12 dimers bind in a sequential fashion forming a multimeric L10(L12)X complex. Post-translationally, one or more lysine residues are methylated.

Forms part of the ribosomal stalk which helps the ribosome interact with GTP-bound translation factors. This Deinococcus geothermalis (strain DSM 11300 / CIP 105573 / AG-3a) protein is Large ribosomal subunit protein uL11.